We begin with the raw amino-acid sequence, 246 residues long: MAGHSKWANIQHRKGRVDAQRGKMWSKLSKAIIVSAKMGGGDPSLNIRLRKAIDDAKAVSMPKDNIERAIKRGTGELDGDAVEEVLYEGYGPGGVAVMCLALTDNRNRTAPELRTMFGKFGGELGKTGCVSYLFERKGIFVFGEGADEEKVTELALENGADDVEVDEDGKVQVTCSPEAFSDLEVAFDEAGMDTEVSEVTQIASTNVDLDESVSGKVLALLEALDDHDDIQTVSTNANFPSESVSE.

It belongs to the TACO1 family.

The protein resides in the cytoplasm. In Rhodopirellula baltica (strain DSM 10527 / NCIMB 13988 / SH1), this protein is Probable transcriptional regulatory protein RB5500.